The chain runs to 119 residues: Translation initiation factor 1A (119 aa).

The disordered stretch occupies residues Met-1–Gly-24. The 75-residue stretch at Gly-24 to Thr-98 folds into the S1-like domain.

It belongs to the eIF-1A family.

Its function is as follows. Seems to be required for maximal rate of protein biosynthesis. Enhances ribosome dissociation into subunits and stabilizes the binding of the initiator Met-tRNA(I) to 40 S ribosomal subunits. The protein is Translation initiation factor 1A (eIF1A) of Thermoplasma acidophilum (strain ATCC 25905 / DSM 1728 / JCM 9062 / NBRC 15155 / AMRC-C165).